Here is a 124-residue protein sequence, read N- to C-terminus: Large ribosomal subunit protein bL12 (124 aa).

This sequence belongs to the bacterial ribosomal protein bL12 family. Homodimer. Part of the ribosomal stalk of the 50S ribosomal subunit. Forms a multimeric L10(L12)X complex, where L10 forms an elongated spine to which 2 to 4 L12 dimers bind in a sequential fashion. Binds GTP-bound translation factors.

Forms part of the ribosomal stalk which helps the ribosome interact with GTP-bound translation factors. Is thus essential for accurate translation. This chain is Large ribosomal subunit protein bL12, found in Borreliella burgdorferi (strain ZS7) (Borrelia burgdorferi).